Consider the following 389-residue polypeptide: Ecto-ADP-ribosyltransferase 3 (389 aa).

The signal sequence occupies residues 1–26 (MKTGHFEIVTMLLATMILVDIFQVKA). Cys43 and Cys256 are oxidised to a cystine. The region spanning 64 to 251 (QQLDTVWENA…LILQSINKTC (188 aa)) is the TR mART core domain. NAD(+) contacts are provided by Tyr101 and Arg163. N-linked (GlcNAc...) asparagine glycosylation occurs at Asn248. 3 consecutive repeat copies span residues 283 to 292 (GEKNQKLEDH), 293 to 302 (SEKNWKLEDH), and 303 to 312 (GEKNQKLEDH). Residues 283–312 (GEKNQKLEDHSEKNWKLEDHGEKNQKLEDH) are 3 X 10 AA tandem repeats of [GS]-E-K-N-[QW]-K-L-E-D-H. The tract at residues 325-362 (MKIPEPFPLPEDKSQGNINNPTPGPVPVPGPKSHPSAS) is disordered. An O-linked (GalNAc...) threonine glycan is attached at Thr346. Positions 346 to 356 (TPGPVPVPGPK) are enriched in pro residues. The GPI-anchor amidated serine moiety is linked to residue Ser362. Positions 363–389 (SGKLLLPQFGMVIILISVSAINLFVAL) are cleaved as a propeptide — removed in mature form.

It belongs to the Arg-specific ADP-ribosyltransferase family. Post-translationally, O-glycosylated with core 1 or possibly core 8 glycans. Testis specific.

It is found in the cell membrane. The enzyme catalyses L-arginyl-[protein] + NAD(+) = N(omega)-(ADP-D-ribosyl)-L-arginyl-[protein] + nicotinamide + H(+). The polypeptide is Ecto-ADP-ribosyltransferase 3 (ART3) (Homo sapiens (Human)).